A 171-amino-acid chain; its full sequence is uncharacterized protein (171 aa).

This is an uncharacterized protein from Bacillus subtilis (strain 168).